The following is an 82-amino-acid chain: MLPFVQERIGLFIVNFFIFTVVCAITLLVCMAFLTATRLCVQCMTGFNTLLVQPALYLYNTGRSVYVKFQDSKPPLPPDEWV.

Residues 1–16 (MLPFVQERIGLFIVNF) lie on the Virion surface side of the membrane. Residues 17-37 (FIFTVVCAITLLVCMAFLTAT) form a helical membrane-spanning segment. The Intravirion portion of the chain corresponds to 38–78 (RLCVQCMTGFNTLLVQPALYLYNTGRSVYVKFQDSKPPLPP).

It belongs to the betacoronaviruses E protein family. As to quaternary structure, homopentamer. Interacts with membrane protein M in the budding compartment of the host cell, which is located between endoplasmic reticulum and the Golgi complex. Interacts with Nucleoprotein.

The protein resides in the host Golgi apparatus membrane. Plays a central role in virus morphogenesis and assembly. Acts as a viroporin and self-assembles in host membranes forming pentameric protein-lipid pores that allow ion transport. Also plays a role in the induction of apoptosis. In Middle East respiratory syndrome-related coronavirus (isolate United Kingdom/H123990006/2012) (MERS-CoV), this protein is Envelope small membrane protein.